The chain runs to 604 residues: Vacuolar protein sorting-associated protein 64 (604 aa).

The segment at 1-89 (MVELEKRRRP…SVHQVSQQQQ (89 aa)) is disordered. Over 1-578 (MVELEKRRRP…LGVVEGKRTR (578 aa)) the chain is Cytoplasmic. Over residues 22 to 34 (DQSNSQGMTKTPE) the composition is skewed to polar residues. Composition is skewed to low complexity over residues 44-57 (RARSNSRSSGSRSN) and 77-89 (SPPSVHQVSQQQQ). The 73-residue stretch at 185–257 (LKLGRPVTNS…NGTFVNGVKI (73 aa)) folds into the FHA domain. A coiled-coil region spans residues 404–563 (NLINMIKTLT…EEKKDTEDTL (160 aa)). Residues 539–561 (INNDNNAKVKQNDSREEKKDTED) form a disordered region. Positions 548–560 (KQNDSREEKKDTE) are enriched in basic and acidic residues. The helical; Anchor for type IV membrane protein transmembrane segment at 579 to 598 (VSKGMLFGVVAISFGLVATA) threads the bilayer. At 599 to 604 (VKQLPQ) the chain is on the lumenal side.

As to quaternary structure, component of a complex at least composed of FAR3, FAR7, FAR8, FAR10, FAR11 and VPS64.

The protein localises to the endoplasmic reticulum membrane. Its function is as follows. Participates in the control of the reentry into the cell cycle following pheromone treatment. Involved in vacuolar protein sorting. This Saccharomyces cerevisiae (strain ATCC 204508 / S288c) (Baker's yeast) protein is Vacuolar protein sorting-associated protein 64 (VPS64).